Consider the following 185-residue polypeptide: Ribosome-recycling factor (185 aa).

It belongs to the RRF family.

The protein localises to the cytoplasm. Functionally, responsible for the release of ribosomes from messenger RNA at the termination of protein biosynthesis. May increase the efficiency of translation by recycling ribosomes from one round of translation to another. The chain is Ribosome-recycling factor from Arthrobacter sp. (strain FB24).